A 425-amino-acid chain; its full sequence is Enolase (425 aa).

Q170 lines the (2R)-2-phosphoglycerate pocket. E214 acts as the Proton donor in catalysis. Mg(2+) contacts are provided by D250, E291, and D317. (2R)-2-phosphoglycerate is bound by residues K342, R371, S372, and K393. The active-site Proton acceptor is the K342.

It belongs to the enolase family. Requires Mg(2+) as cofactor.

Its subcellular location is the cytoplasm. The protein resides in the secreted. It is found in the cell surface. It catalyses the reaction (2R)-2-phosphoglycerate = phosphoenolpyruvate + H2O. The protein operates within carbohydrate degradation; glycolysis; pyruvate from D-glyceraldehyde 3-phosphate: step 4/5. In terms of biological role, catalyzes the reversible conversion of 2-phosphoglycerate (2-PG) into phosphoenolpyruvate (PEP). It is essential for the degradation of carbohydrates via glycolysis. This Methanococcoides burtonii (strain DSM 6242 / NBRC 107633 / OCM 468 / ACE-M) protein is Enolase.